The sequence spans 831 residues: Phenylalanine--tRNA ligase beta subunit (831 aa).

A tRNA-binding domain is found at 44–155 (GPVDGPVTVG…GAAEPGADGA (112 aa)). Positions 414 to 489 (WSPPPIRMGV…RLEGLEVIPS (76 aa)) constitute a B5 domain. Positions 467, 473, 476, and 477 each coordinate Mg(2+). Residues 737 to 830 (SPYPAVFQDV…AAERVGAVLR (94 aa)) form the FDX-ACB domain.

This sequence belongs to the phenylalanyl-tRNA synthetase beta subunit family. Type 1 subfamily. Tetramer of two alpha and two beta subunits. It depends on Mg(2+) as a cofactor.

The protein resides in the cytoplasm. The enzyme catalyses tRNA(Phe) + L-phenylalanine + ATP = L-phenylalanyl-tRNA(Phe) + AMP + diphosphate + H(+). The chain is Phenylalanine--tRNA ligase beta subunit from Mycobacterium bovis (strain ATCC BAA-935 / AF2122/97).